Consider the following 269-residue polypeptide: Shikimate dehydrogenase (NADP(+)) (269 aa).

Residues 22–24 and T68 contribute to the shikimate site; that span reads TLS. K72 acts as the Proton acceptor in catalysis. 2 residues coordinate shikimate: N93 and D104. NADP(+)-binding positions include 128–132, 152–157, and F210; these read GAGGA and NRTNLR. Y212 contacts shikimate. G233 is an NADP(+) binding site.

It belongs to the shikimate dehydrogenase family. As to quaternary structure, homodimer.

It carries out the reaction shikimate + NADP(+) = 3-dehydroshikimate + NADPH + H(+). Its pathway is metabolic intermediate biosynthesis; chorismate biosynthesis; chorismate from D-erythrose 4-phosphate and phosphoenolpyruvate: step 4/7. Involved in the biosynthesis of the chorismate, which leads to the biosynthesis of aromatic amino acids. Catalyzes the reversible NADPH linked reduction of 3-dehydroshikimate (DHSA) to yield shikimate (SA). The chain is Shikimate dehydrogenase (NADP(+)) from Saccharolobus islandicus (strain Y.N.15.51 / Yellowstone #2) (Sulfolobus islandicus).